A 103-amino-acid polypeptide reads, in one-letter code: Pyrimidine/purine nucleoside phosphorylase (103 aa).

The protein belongs to the nucleoside phosphorylase PpnP family.

It carries out the reaction a purine D-ribonucleoside + phosphate = a purine nucleobase + alpha-D-ribose 1-phosphate. The catalysed reaction is adenosine + phosphate = alpha-D-ribose 1-phosphate + adenine. The enzyme catalyses cytidine + phosphate = cytosine + alpha-D-ribose 1-phosphate. It catalyses the reaction guanosine + phosphate = alpha-D-ribose 1-phosphate + guanine. It carries out the reaction inosine + phosphate = alpha-D-ribose 1-phosphate + hypoxanthine. The catalysed reaction is thymidine + phosphate = 2-deoxy-alpha-D-ribose 1-phosphate + thymine. The enzyme catalyses uridine + phosphate = alpha-D-ribose 1-phosphate + uracil. It catalyses the reaction xanthosine + phosphate = alpha-D-ribose 1-phosphate + xanthine. In terms of biological role, catalyzes the phosphorolysis of diverse nucleosides, yielding D-ribose 1-phosphate and the respective free bases. Can use uridine, adenosine, guanosine, cytidine, thymidine, inosine and xanthosine as substrates. Also catalyzes the reverse reactions. The sequence is that of Pyrimidine/purine nucleoside phosphorylase from Shewanella sp. (strain MR-4).